The chain runs to 204 residues: Molybdenum cofactor guanylyltransferase (204 aa).

Residues 10-12, Lys23, Asn51, Asp69, and Asp99 contribute to the GTP site; that span reads LAG. Asp99 is a binding site for Mg(2+).

This sequence belongs to the MobA family. Monomer. Requires Mg(2+) as cofactor.

Its subcellular location is the cytoplasm. It carries out the reaction Mo-molybdopterin + GTP + H(+) = Mo-molybdopterin guanine dinucleotide + diphosphate. In terms of biological role, transfers a GMP moiety from GTP to Mo-molybdopterin (Mo-MPT) cofactor (Moco or molybdenum cofactor) to form Mo-molybdopterin guanine dinucleotide (Mo-MGD) cofactor. In Shewanella piezotolerans (strain WP3 / JCM 13877), this protein is Molybdenum cofactor guanylyltransferase.